The sequence spans 643 residues: Phosphatidylinositol-3,5-bisphosphate 3-phosphatase MTMR2 (643 aa).

Composition is skewed to polar residues over residues 1-12 and 23-40; these read MEKSSSCESLGS and DSLS…VHTK. The disordered stretch occupies residues 1 to 54; sequence MEKSSSCESLGSQPAVARPPSVDSLSSASTSHSENSVHTKSASVVSSDSISTSA. A phosphoserine mark is found at S6 and S9. The span at 41–54 shows a compositional bias: low complexity; the sequence is SASVVSSDSISTSA. At S58 the chain carries Phosphoserine. The GRAM domain maps to 68–139; it reads NKLAEMEEPP…GVISRVEKIG (72 aa). The Myotubularin phosphatase domain occupies 205–580; that stretch reads GWKLYDSLSE…RHLELWVGYY (376 aa). The a 1,2-diacyl-sn-glycero-3-phospho-(1D-myo-inositol-3,5-bisphosphate) site is built by N330, N355, and I356. A 1,2-diacyl-sn-glycero-3-phospho-(1D-myo-inositol-3-phosphate) contacts are provided by N330, N355, and I356. The active-site Phosphocysteine intermediate is the C417. A 1,2-diacyl-sn-glycero-3-phospho-(1D-myo-inositol-3,5-bisphosphate)-binding residues include S418, D419, G420, W421, D422, R423, R459, and R463. A 1,2-diacyl-sn-glycero-3-phospho-(1D-myo-inositol-3-phosphate) contacts are provided by S418, D419, G420, W421, D422, and R423. A 1,2-diacyl-sn-glycero-3-phospho-(1D-myo-inositol-3-phosphate) is bound at residue R463. Positions 593-627 form a coiled coil; the sequence is IHNRYKELLAKRAELQKKVEELQREISNRSTSSSE. The disordered stretch occupies residues 614–643; the sequence is LQREISNRSTSSSERAGSPAQCVTPVQTVV.

It belongs to the protein-tyrosine phosphatase family. Non-receptor class myotubularin subfamily. As to quaternary structure, homodimer (via coiled-coil domain). Heterotetramer consisting of one MTMR2 dimer and one SBF2/MTMR13 dimer; specifically in peripheral nerves stabilizes SBF2/MTMR13 at the membranes and increases MTMR2 catalytic activity towards phosphatidylinositol 3,5-bisphosphate and to a lesser extent towards phosphatidylinositol 3-phosphate. Heterodimer with SBF1/MTMR5; acts as an adapter for the phosphatase MTMR2 to regulate MTMR2 catalytic activity and subcellular location. Heterodimer with MTMR12. Post-translationally, phosphorylation at Ser-58 decreases MTMR2 localization to endocytic vesicular structures.

It localises to the cytoplasm. The protein resides in the early endosome membrane. It is found in the perinuclear region. The protein localises to the cell projection. Its subcellular location is the axon. It localises to the endosome membrane. It carries out the reaction a 1,2-diacyl-sn-glycero-3-phospho-(1D-myo-inositol-3,5-bisphosphate) + H2O = a 1,2-diacyl-sn-glycero-3-phospho-(1D-myo-inositol-5-phosphate) + phosphate. It catalyses the reaction a 1,2-diacyl-sn-glycero-3-phospho-(1D-myo-inositol-3-phosphate) + H2O = a 1,2-diacyl-sn-glycero-3-phospho-(1D-myo-inositol) + phosphate. The catalysed reaction is 1,2-dioctanoyl-sn-glycero-3-phospho-(1-D-myo-inositol-3-phosphate) + H2O = 1,2-dioctanoyl-sn-glycero-3-phospho-(1D-myo-inositol) + phosphate. The enzyme catalyses 1,2-dioctanoyl-sn-glycero-3-phospho-(1D-myo-inositol-3,5-bisphosphate) + H2O = 1,2-dioctanoyl-sn-glycero-3-phospho-(1D-myo-inositol-5-phosphate) + phosphate. In terms of biological role, lipid phosphatase that specifically dephosphorylates the D-3 position of phosphatidylinositol 3-phosphate and phosphatidylinositol 3,5-bisphosphate, generating phosphatidylinositol and phosphatidylinositol 5-phosphate. Regulates the level of these phosphoinositides critical for various biological processes including autophagy initiation and autophagosome maturation. The sequence is that of Phosphatidylinositol-3,5-bisphosphate 3-phosphatase MTMR2 from Bos taurus (Bovine).